We begin with the raw amino-acid sequence, 943 residues long: MTDYKATLNLPDTAFPMKAGLPQREPQILQRWDSIGLYGKLREIGKDRPKFVLHDGPPYANGTIHIGHALNKILKDMIIRSKTLSGFDAPYVPGWDCHGLPIEHKVEVTHGKNLGADKTRELCRAYATEQIEGQKTEFIRLGVLGDFANPYKTMNFKNEAGEIRALAEIVKGGFVFKGLKPVNWCFDCGSALAEAEVEYENKKSSTIDVAFPIADEAKLAAAFGLPSLAKPAAIVIWTTTPWTIPANQALNVHPEFTYALVDIGDKLLVLAEELVESCLTRYGVEGTVLATAPGSALELINFRHPFYDRLSPVYLADYVELGAGTGVVHSAPAYGVDDFVTCKKYGMVNDDILNPVQSNGVYVPSLEFFGGQFIWKANPAIVDKLTEVGALLHTTVIEHSYMHCWRHKTPLIYRATAQWFIGMDKEPVSGDTLRVRSLKAIEDTKFVPAWGQARLHSMIANRPDWCISRQRNWGVPIPFFLNKESGELHPRTVELMEEVAKRVEVEGIEAWFKLDAAELLGDEAPQYDKISDTLDVWFDSGTTHWHVLRGSHPMGHETGPRADLYLEGSDQHRGWFHSSLLTGCAIDNHAPYRELLTHGFTVDESGRKMSKSLGNVIAPQKVNDTLGADIMRLWVASTDYSGEMAVSEQILQRSADAYRRIRNTARFLLSNLTGFNPATDLLPAEDMLALDRWAVDRTLLLQRELQEHYGEYRFWNVYSKIHNFCVQELGGFYLDIIKDRQYTTGADSKARRSCQTALFHISEALVRWIAPILAFTADELWQYLPGERNESVMLNTWYEGLTELPEGFELGREYWDRIMEVKVAVNKEMEIQRAAKAVGGNLQAEVTLFAEDALTADLAKLSNELRFVLITSTATVAPFVQAPADAVATEVSGLKLKIVKSAFPKCARCWHCREDVGVNPEHPEICGRCVDNIDGAGEVRHYA.

A 'HIGH' region motif is present at residues 58 to 68; sequence PYANGTIHIGH. Glu-567 is an L-isoleucyl-5'-AMP binding site. The short motif at 608-612 is the 'KMSKS' region element; that stretch reads KMSKS. ATP is bound at residue Lys-611. Residues Cys-906, Cys-909, Cys-926, and Cys-929 each contribute to the Zn(2+) site.

This sequence belongs to the class-I aminoacyl-tRNA synthetase family. IleS type 1 subfamily. Monomer. It depends on Zn(2+) as a cofactor.

It is found in the cytoplasm. It carries out the reaction tRNA(Ile) + L-isoleucine + ATP = L-isoleucyl-tRNA(Ile) + AMP + diphosphate. Functionally, catalyzes the attachment of isoleucine to tRNA(Ile). As IleRS can inadvertently accommodate and process structurally similar amino acids such as valine, to avoid such errors it has two additional distinct tRNA(Ile)-dependent editing activities. One activity is designated as 'pretransfer' editing and involves the hydrolysis of activated Val-AMP. The other activity is designated 'posttransfer' editing and involves deacylation of mischarged Val-tRNA(Ile). The protein is Isoleucine--tRNA ligase of Pseudomonas fluorescens (strain Pf0-1).